We begin with the raw amino-acid sequence, 405 residues long: L-carnitine CoA-transferase (405 aa).

The CoA site is built by K97 and R104. D169 (nucleophile) is an active-site residue.

This sequence belongs to the CoA-transferase III family. CaiB subfamily. Homodimer.

The protein localises to the cytoplasm. The enzyme catalyses crotonobetainyl-CoA + (R)-carnitine = crotonobetaine + (R)-carnitinyl-CoA. It carries out the reaction 4-(trimethylamino)butanoyl-CoA + (R)-carnitine = (R)-carnitinyl-CoA + 4-(trimethylamino)butanoate. The protein operates within amine and polyamine metabolism; carnitine metabolism. Catalyzes the reversible transfer of the CoA moiety from gamma-butyrobetainyl-CoA to L-carnitine to generate L-carnitinyl-CoA and gamma-butyrobetaine. Is also able to catalyze the reversible transfer of the CoA moiety from gamma-butyrobetainyl-CoA or L-carnitinyl-CoA to crotonobetaine to generate crotonobetainyl-CoA. The chain is L-carnitine CoA-transferase from Escherichia coli (strain SE11).